The primary structure comprises 44 residues: uncharacterized protein (44 aa).

This is an uncharacterized protein from Treponema pallidum (strain Nichols).